The primary structure comprises 621 residues: Protein Rep78 (621 aa).

The PV NS1-Nuc domain occupies 1-199 (MPGFYEIVIK…AQHLTHVSQT (199 aa)). Residues E83, H90, and H92 each contribute to the a divalent metal cation site. The RCR-2 signature appears at 90–92 (HMH). Y156 (for nuclease activity) is an active-site residue. The RCR-3 motif lies at 156–160 (YLLPK). A compositionally biased stretch (polar residues) spans 196–211 (VSQTQEQNKENQNPNS). The interval 196–216 (VSQTQEQNKENQNPNSDAPVI) is disordered. The SF3 helicase domain occupies 308 to 463 (DPQYAASVFL…LDHDFGKVTK (156 aa)). An ATP-binding site is contributed by 334–341 (GPATTGKT). A disordered region spans residues 489 to 520 (GGAKKRPAPSDADISEPKRVRESVAQPSTSDA).

In terms of assembly, hexamer when associated with the viral DNA ori sequence. Interacts with host PRKX. Interacts with host TOPORS. Interacts with host TBP and SUB1/PC4; these interactions play important roles in transcriptional regulation. Requires a divalent metal cation as cofactor.

It localises to the host nucleus. Functionally, plays an essential role in the initiation of viral DNA synthesis. Binds specifically to an inverted terminal repeat element (ITR) on the 3' and 5' ends of the viral DNA, where it cleaves a site specifically to generate a priming site for initiation of the synthesis of a complementary strand. Also plays a role as transcriptional regulator, DNA helicase and as key factors in site-specific integration of the viral genome. Regulates host PKA activity by interacting with host PRKX as a mechanism of interfering with helper virus propagation and promoting its own replication. Inhibits the host cell cycle G1/S, S and G2/M transitions. These arrests may provide essential cellular factors for viral DNA replication. This Adeno-associated virus 2 (isolate Srivastava/1982) (AAV-2) protein is Protein Rep78 (Rep78).